A 219-amino-acid chain; its full sequence is Elongation factor Ts (219 aa).

Residues 83–86 (TDFV) form an involved in Mg(2+) ion dislocation from EF-Tu region.

Belongs to the EF-Ts family.

Its subcellular location is the cytoplasm. Associates with the EF-Tu.GDP complex and induces the exchange of GDP to GTP. It remains bound to the aminoacyl-tRNA.EF-Tu.GTP complex up to the GTP hydrolysis stage on the ribosome. The protein is Elongation factor Ts of Synechococcus sp. (strain WH7803).